The primary structure comprises 160 residues: Nucleotide-binding protein BAV0791 (160 aa).

The protein belongs to the YajQ family.

In terms of biological role, nucleotide-binding protein. This Bordetella avium (strain 197N) protein is Nucleotide-binding protein BAV0791.